Consider the following 961-residue polypeptide: IQ motif and SEC7 domain-containing protein 1 (961 aa).

Residues S21–S113 form a disordered region. A compositionally biased stretch (polar residues) spans S29–S38. Phosphoserine occurs at positions 88, 104, and 106. In terms of domain architecture, IQ spans T133 to E162. A phosphoserine mark is found at S179, S247, and S251. Disordered regions lie at residues S263–L291, L310–L332, and K347–A515. A compositionally biased stretch (basic and acidic residues) spans A272–L291. Basic and acidic residues-rich tracts occupy residues E364–H374 and L428–E444. The segment covering D469–S487 has biased composition (low complexity). A phosphoserine mark is found at S510 and S513. Residues A515 to R708 enclose the SEC7 domain. One can recognise a PH domain in the interval H772 to E864. The stretch at Q846–Q877 forms a coiled coil. S890 is subject to Phosphoserine. Y909 carries the phosphotyrosine modification. The segment at L920–S961 is disordered. S922 and S923 each carry phosphoserine. Polar residues predominate over residues S938–E947. The segment covering F951–S961 has biased composition (pro residues).

It belongs to the BRAG family. Interacts with ARF1 and ARF6. Interacts with GRIA2; the interaction is required for ARF6 activation. In terms of tissue distribution, expressed in hippocampus.

The protein resides in the cytoplasm. The protein localises to the nucleus. It is found in the postsynaptic density. Its subcellular location is the cytoplasmic vesicle. It localises to the secretory vesicle. The protein resides in the synaptic vesicle. Its function is as follows. Guanine nucleotide exchange factor for ARF1 and ARF6. Guanine nucleotide exchange factor activity is enhanced by lipid binding. Accelerates GTP binding by ARFs of all three classes. Guanine nucleotide exchange protein for ARF6, mediating internalization of beta-1 integrin. Involved in neuronal development. In neurons, plays a role in the control of vesicle formation by endocytoc cargo. Upon long term depression, interacts with GRIA2 and mediates the activation of ARF6 to internalize synaptic AMPAR receptors. The chain is IQ motif and SEC7 domain-containing protein 1 (Iqsec1) from Mus musculus (Mouse).